The sequence spans 225 residues: Myelin-associated neurite-outgrowth inhibitor (225 aa).

Over 1 to 58 (MNPVYSPGSSGVPYANAKGIGYPAGFPMGYAAAAPAYSPNMYAGPNPAFQQELEHPAH) the chain is Cytoplasmic. A helical membrane pass occupies residues 59–75 (VSSGVQMFMFGHAFSVA). At 76-173 (RNGAIPSGYT…PAPIQSPRGN (98 aa)) the chain is on the extracellular side. The chain crosses the membrane as a helical span at residues 174 to 193 (GVAMGMVAGTTMAMSAGTLL). Residues 194–225 (TSHYPSPVAPQVTMPTYRPPGTPTYSYVPPQW) lie on the Cytoplasmic side of the membrane.

The protein belongs to the FAM168 family.

It is found in the cytoplasm. It localises to the perinuclear region. The protein localises to the cell membrane. Its subcellular location is the cell projection. The protein resides in the axon. Its function is as follows. Inhibitor of neuronal axonal outgrowth. The polypeptide is Myelin-associated neurite-outgrowth inhibitor (fam168b) (Xenopus laevis (African clawed frog)).